The primary structure comprises 247 residues: C-X-C motif chemokine 16 (247 aa).

An N-terminal signal peptide occupies residues 1–26 (MRRGFGPLALTLFLFFFALLTLPGDG). Residues 27-198 (NQGSVAGSCY…EPGAGAGTQA (172 aa)) lie on the Extracellular side of the membrane. 2 disulfide bridges follow: Cys35–Cys65 and Cys37–Cys79. The tract at residues 120-152 (IPEATEGKPPDTSTAVQFQSTQQSTFPSGAPSL) is disordered. Residues 131–147 (TSTAVQFQSTQQSTFPS) are compositionally biased toward low complexity. The helical transmembrane segment at 199 to 219 (LVPVLSLLAIVFFLVAAMVCV) threads the bilayer. Residues 220 to 247 (LCNRRVTRQSSSGLQLCYTPVEPRPQGL) are Cytoplasmic-facing.

This sequence belongs to the intercrine alpha (chemokine CxC) family. Post-translationally, glycosylated.

Its subcellular location is the membrane. In terms of biological role, induces a strong chemotactic response. Induces calcium mobilization. Binds to CXCR6/Bonzo. Also acts as a scavenger receptor on macrophages, which specifically binds to OxLDL (oxidized low density lipoprotein), suggesting that it may be involved in pathophysiology such as atherogenesis. The sequence is that of C-X-C motif chemokine 16 (Cxcl16) from Rattus norvegicus (Rat).